We begin with the raw amino-acid sequence, 432 residues long: Endosome-associated-trafficking regulator 1 (432 aa).

Ser-18 is subject to Phosphoserine. Over residues 126 to 143 (DTTTSRIYPKEASRHPLG) the composition is skewed to basic and acidic residues. A disordered region spans residues 126–145 (DTTTSRIYPKEASRHPLGLE). Ser-148 is modified (phosphoserine). The interval 174–196 (LEEDEDDGWNITYLPSAVDQTHS) is required for interaction with PTPN13. The disordered stretch occupies residues 226–250 (PPWTLSDTDSRISPASPAGSPNADF). A phosphoserine mark is found at Ser-241 and Ser-245. Coiled coils occupy residues 262-289 (LRTL…VQSF) and 315-370 (FHDL…LRSG).

It belongs to the ENTR1 family. Found in a complex with ENTR1, PTPN13 and GIT1. Interacts with PTPN13 (via the FERM domain). Interacts (via N-terminus) with GIT1 (via N- and C-terminus); this interaction is direct. Interacts with NOD2. Interacts (via N-terminus) with IFT88. Interacts with VPS35. In terms of processing, phosphorylated.

It is found in the cytoplasm. It localises to the early endosome. The protein localises to the endosome. The protein resides in the recycling endosome. Its subcellular location is the midbody. It is found in the cytoskeleton. It localises to the microtubule organizing center. The protein localises to the centrosome. The protein resides in the cilium basal body. In terms of biological role, may be involved in modulation of TNF response. May be involved in presentation of TNFRSF1A on the cell surface. Involved in the endosome-to-plasma membrane trafficking and recycling of SNX27-retromer-dependent cargo proteins, such as GLUT1. Involved in the regulation of cytokinesis; the function may involve PTPN13 and GIT1. Functionally, endosome-associated protein that plays a role in membrane receptor sorting, cytokinesis and ciliogenesis. Involved in the endosome-to-plasma membrane trafficking and recycling of SNX27-retromer-dependent cargo proteins, such as GLUT1. Involved in the regulation of cytokinesis; the function may involve PTPN13 and GIT1. Plays a role in the formation of cilia. Involved in cargo protein localization, such as PKD2, at primary cilia. Involved in the presentation of the tumor necrosis factor (TNF) receptor TNFRSF1A on the cell surface, and hence in the modulation of the TNF-induced apoptosis. The protein is Endosome-associated-trafficking regulator 1 of Mus musculus (Mouse).